A 1674-amino-acid chain; its full sequence is Maestro heat-like repeat-containing protein family member 2A (1674 aa).

Residues methionine 1 to leucine 26 are disordered. HEAT repeat units lie at residues alanine 73–glutamine 96, arginine 97–glutamate 133, methionine 195–phenylalanine 234, leucine 254–proline 292, serine 382–proline 419, arginine 424–glutamine 461, proline 573–proline 612, alanine 615–alanine 641, tryptophan 642–serine 679, lysine 739–lysine 776, glycine 993–serine 1030, aspartate 1221–proline 1263, glutamate 1381–lysine 1420, and leucine 1627–serine 1674.

The polypeptide is Maestro heat-like repeat-containing protein family member 2A (MROH2A) (Homo sapiens (Human)).